A 391-amino-acid polypeptide reads, in one-letter code: Putative protein PLEKHA9 (391 aa).

The polypeptide is Putative protein PLEKHA9 (PLEKHA8P1) (Homo sapiens (Human)).